We begin with the raw amino-acid sequence, 187 residues long: uncharacterized protein (187 aa).

A signal peptide spans 1-28 (MRLHRTNNSRRCTILLILALKIFDFVDT). 4 N-linked (GlcNAc...) asparagine glycosylation sites follow: N58, N70, N156, and N168.

It localises to the secreted. This is an uncharacterized protein from Caenorhabditis elegans.